The sequence spans 635 residues: Early transcription factor 70 kDa subunit (635 aa).

A Helicase ATP-binding domain is found at 32-185 (RSIIDENKSV…SNIISLMSDE (154 aa)). 45–52 (HIMGSGKT) provides a ligand contact to ATP. The DEXH box signature appears at 135–138 (DEAH). The Helicase C-terminal domain occupies 326-505 (KFKYFITKIE…TLPFDIKKLL (180 aa)).

The protein belongs to the helicase family. VETF subfamily. In terms of assembly, heterodimer of a 70 kDa and a 82 kDa subunit. Part of the early transcription complex composed of ETF, RAP94, and the DNA-directed RNA polymerase.

The protein resides in the virion. In terms of biological role, acts with RNA polymerase to initiate transcription from early gene promoters. Is recruited by the RPO-associated protein of 94 kDa (RAP94) to form the early transcription complex, which also contains the core RNA polymerase. ETF heterodimer binds to early gene promoters. This is Early transcription factor 70 kDa subunit (VETFS) from Oryctolagus cuniculus (Rabbit).